The primary structure comprises 1152 residues: Syntaxin-binding protein 5 (1152 aa).

Residues 14-35 form a disordered region; sequence TAGSSSASQQQQQQQHPPGNRE. Low complexity predominate over residues 17-28; the sequence is SSSASQQQQQQQ. 10 WD repeats span residues 62–95, 102–141, 146–182, 201–235, 241–273, 295–337, 345–379, 401–478, 506–620, and 634–696; these read SALA…CYCQ, VIQL…SLKF, VTFC…GYVI, HISD…DYRY, IHSV…PTKP, PILK…KSTA, IVDF…LIDL, TCCE…YKLK, QIIS…ELVI, and TSLA…SGAG. Disordered stretches follow at residues 557-596 and 675-731; these read TPEG…GLRD and SNDP…QKVN. At S693 the chain carries Phosphoserine. The segment covering 713-722 has biased composition (low complexity); that stretch reads SPTSGSSSPH. S724 is modified (phosphoserine; by PKA). Phosphoserine is present on S760. T763 carries the post-translational modification Phosphothreonine. S783 carries the post-translational modification Phosphoserine. T785 bears the Phosphothreonine mark. Residue S786 is modified to Phosphoserine. WD repeat units follow at residues 795–852, 861–935, 940–984, and 998–1021; these read ISAL…SGTI, RMAF…QNCA, ITET…LDVY, and CFAN…TYSQ. Residues 879 to 893 show a composition bias toward basic and acidic residues; the sequence is WTEHNVPEEKDEKEK. A disordered region spans residues 879 to 907; sequence WTEHNVPEEKDEKEKLKKRRPVSVSPSSS. Residues S901 and S903 each carry the phosphoserine modification. Residue T1040 is modified to Phosphothreonine. A phosphoserine mark is found at S1059 and S1132. The v-SNARE coiled-coil homology domain maps to 1087 to 1147; it reads GIEGVKGAAS…HEMMLKYKDK (61 aa).

It belongs to the WD repeat L(2)GL family. Part of a complex that contains STXBP5, STX4A and SNAP23. Interacts with STX1A and STX4A via its v-SNARE homology domain. Part of a complex that contains STX1, STXBP5, SNAP25 and SYT1. In terms of processing, phosphorylation by PKA reduces interaction with STX1A and enhances synaptic neurotransmitter release. Isoform 1 is detected in heart, brain, lung, liver, skeletal muscle, kidney and testis. Isoform 2 is detected in brain and in testis. Isoform 3 is detected in testis.

Its subcellular location is the cytoplasm. It is found in the cell membrane. The protein resides in the cytoplasmic vesicle membrane. It localises to the synapse. The protein localises to the cytoplasmic vesicle. Its subcellular location is the secretory vesicle. It is found in the synaptic vesicle. Its function is as follows. Inhibits translocation of GLUT4 from intracellular vesicles to the plasma membrane. Plays a regulatory role in calcium-dependent exocytosis and neurotransmitter release. Inhibits membrane fusion between transport vesicles and the plasma membrane. May modulate the assembly of trans-SNARE complexes between transport vesicles and the plasma membrane. Competes with STXBP1 for STX1 binding. The sequence is that of Syntaxin-binding protein 5 (Stxbp5) from Rattus norvegicus (Rat).